Consider the following 260-residue polypeptide: Ribosomal protein L11 methyltransferase (260 aa).

The S-adenosyl-L-methionine site is built by threonine 119, glycine 140, aspartate 162, and asparagine 203.

The protein belongs to the methyltransferase superfamily. PrmA family.

Its subcellular location is the cytoplasm. The catalysed reaction is L-lysyl-[protein] + 3 S-adenosyl-L-methionine = N(6),N(6),N(6)-trimethyl-L-lysyl-[protein] + 3 S-adenosyl-L-homocysteine + 3 H(+). Methylates ribosomal protein L11. The protein is Ribosomal protein L11 methyltransferase of Thermosipho africanus (strain TCF52B).